Reading from the N-terminus, the 359-residue chain is Protein RecA (359 aa).

Residue 77–84 (GPESSGKT) participates in ATP binding.

This sequence belongs to the RecA family.

It localises to the cytoplasm. Functionally, can catalyze the hydrolysis of ATP in the presence of single-stranded DNA, the ATP-dependent uptake of single-stranded DNA by duplex DNA, and the ATP-dependent hybridization of homologous single-stranded DNAs. It interacts with LexA causing its activation and leading to its autocatalytic cleavage. In Paramagnetospirillum magneticum (strain ATCC 700264 / AMB-1) (Magnetospirillum magneticum), this protein is Protein RecA.